Reading from the N-terminus, the 400-residue chain is LIM homeobox transcription factor 1-beta.1 (400 aa).

2 LIM zinc-binding domains span residues 54 to 113 and 114 to 175; these read AVCE…LFAA and KCSG…EKDL. The tract at residues 175–228 is disordered; that stretch reads LLSSGSPDDSDSVKSDDEEGDVKPGKGRVNQGKGSDDGKDPRRPKRPRTILTTQ. The segment at residues 218–277 is a DNA-binding region (homeobox); that stretch reads PKRPRTILTTQQRRAFKASFEVSSKPCRKVRETLAAETGLSVRVVQVWFQNQRAKIKKLA.

As to expression, shows a temporal expression pattern in three main areas: neural, kidney and limbs. From stage 13 onwards, expressed in regions of the nervous system including the placodes and otic vesicles, eye, specific sets of neurons, and in discreet regions of the neural tube. From stage 13, also expressed in the presumptive pronephros, and from stage 27 expression is predominant in the capsule of the pronephric glomus. Also expressed in the developing forelimbs and hindlimbs. In metamorphosing tadpoles, expressed in the eye, brain, muscle and mesonephric kidney.

The protein localises to the nucleus. In terms of biological role, required for early specification of the kidney glomus, lying upstream of wt1 in the pathway controlling glomus differentiation. The balance in levels and expression patterns of binding partners such as lhx1/lim-1 influences differentiation into glomus or tubule derivatives. Involved in specification of serotonergic neurons. The sequence is that of LIM homeobox transcription factor 1-beta.1 from Xenopus laevis (African clawed frog).